Consider the following 117-residue polypeptide: Large ribosomal subunit protein bL20c (117 aa).

This sequence belongs to the bacterial ribosomal protein bL20 family.

It localises to the plastid. The protein localises to the chloroplast. Functionally, binds directly to 23S ribosomal RNA and is necessary for the in vitro assembly process of the 50S ribosomal subunit. It is not involved in the protein synthesizing functions of that subunit. The polypeptide is Large ribosomal subunit protein bL20c (Olimarabidopsis pumila (Dwarf rocket)).